A 331-amino-acid polypeptide reads, in one-letter code: Meiotic recombination protein W68 (331 aa).

A Topo IIA-type catalytic domain is found at 1–120 (MDEFSENIER…LGILAASKGL (120 aa)). Tyr-81 functions as the O-(5'-phospho-DNA)-tyrosine intermediate in the catalytic mechanism. Mg(2+)-binding residues include Glu-167 and Asp-221.

The protein belongs to the TOP6A family. Mg(2+) is required as a cofactor.

Its subcellular location is the nucleus. The catalysed reaction is ATP-dependent breakage, passage and rejoining of double-stranded DNA.. Required for meiotic recombination. Together with mei-P22, mediates DNA cleavage that forms the double-strand breaks (DSB) that initiate meiotic recombination. This chain is Meiotic recombination protein W68, found in Drosophila melanogaster (Fruit fly).